An 81-amino-acid chain; its full sequence is Defensin-like protein 45 (81 aa).

A signal peptide spans 1-27 (MAITKTSATFVLLIILAASLSNFNVLA). Cystine bridges form between Cys-40–Cys-79, Cys-44–Cys-67, Cys-53–Cys-77, and Cys-57–Cys-78.

This sequence belongs to the DEFL family.

It localises to the secreted. The polypeptide is Defensin-like protein 45 (Arabidopsis thaliana (Mouse-ear cress)).